A 384-amino-acid chain; its full sequence is MAVLTESELIQIRRHLHEIPELALQEKETHDYLLKIIKGFNSEFLTIKVPEELPTAILVLIKGSNPQRTIGYRTDIDALPVEEKTNLPFSSTHPGIMHACGHDIHMSVALGLLSYFSENQPKDNLLFFFQPAEESESGGKKAYEDGIFEGKFRPDEFYGLHDNPELPAGAIGCREGTLFAGTTEVNIDLIGKGGHAAFPQNANDTVVAAASLIMQIQTVISRSIDPIQSGVITLGKVRAGTIRNVIAGQTRIEGTIRGLTQKMILQIDQRLQDLCEGIARSYNMKVNLELNQGGYWPVENNPELTKNFISYMKNNPEVDFVETKPKMTGEDFGFLLAKFPGTMFWLGVGDPDSQLHSANLNPDEKSIIRGVNAIKGFLINRMGI.

Residue Asp75 is part of the active site. Catalysis depends on Glu134, which acts as the Proton acceptor.

This sequence belongs to the peptidase M20A family. N-acetyldiaminopimelate deacetylase subfamily.

The enzyme catalyses N-acetyl-(2S,6S)-2,6-diaminopimelate + H2O = (2S,6S)-2,6-diaminopimelate + acetate. Its pathway is amino-acid biosynthesis; L-lysine biosynthesis via DAP pathway; LL-2,6-diaminopimelate from (S)-tetrahydrodipicolinate (acetylase route): step 3/3. Catalyzes the conversion of N-acetyl-diaminopimelate to diaminopimelate and acetate. The chain is N-acetyldiaminopimelate deacetylase from Lactobacillus helveticus (strain DPC 4571).